A 541-amino-acid polypeptide reads, in one-letter code: MSMTSLSTKSRRQEDVVIEGWLHKKGEHIRNWRPRYFMIFNDGALLGFRAKPKEGQPFPEPLNDFMIKDAATMLFEKPRPNMFMVRCLQWTTVIERTFYAESAEVRQRWIHAIESISKKYKGTNANPQEELMETNQQPKIDEDSEFAGAAHAIMGQPSSGHGDNCSIDFRASMISIADTSEAAKRDKITMEDFDFLKVLGKGTFGKVILCKEKRTQKLYAIKILKKDVIIAREEVAHTLTENRVLQRCKHPFLTELKYSFQEQHYLCFVMQFANGGELFTHVRKCGTFSEPRARFYGAEIVLALGYLHRCDIVYRDMKLENLLLDKDGHIKIADFGLCKEEISFGDKTSTFCGTPEYLAPEVLDDHDYGRCVDWWGVGVVMYEMMCGRLPFYSKDHNKLFELIMAGDLRFPSKLSQEARTLLTGLLVKDPTQRLGGGPEDALEICRADFFRTVDWEATYRKEIEPPYKPNVQSETDTSYFDNEFTSQPVQLTPPSRSGALATVDEQEEMQSNFTQFSFHNVMGSINRIHEASEDNEDYDMG.

One can recognise a PH domain in the interval 15–118 (DVVIEGWLHK…WIHAIESISK (104 aa)). One can recognise a Protein kinase domain in the interval 193–450 (FDFLKVLGKG…ALEICRADFF (258 aa)). ATP contacts are provided by residues 199–207 (LGKGTFGKV) and Lys-222. The active-site Proton acceptor is the Asp-316. Phosphothreonine is present on Thr-350. Positions 451–528 (RTVDWEATYR…HNVMGSINRI (78 aa)) constitute an AGC-kinase C-terminal domain. At Ser-517 the chain carries Phosphoserine.

This sequence belongs to the protein kinase superfamily. AGC Ser/Thr protein kinase family. RAC subfamily. As to quaternary structure, interacts with pdk-1, sgk-1, akt-2 and daf-16. Part of a complex containing sgk-1, akt-1 and akt-2. Interacts with cmd-1 in the presence of Ca(2+). Interacts with let-92 phosphatase regulatory subunit pptr-1. It depends on Mg(2+) as a cofactor. In terms of tissue distribution, expressed in neurons, muscle cells of the pharynx, rectal gland cells, vulva and spermatheca.

It carries out the reaction L-seryl-[protein] + ATP = O-phospho-L-seryl-[protein] + ADP + H(+). The enzyme catalyses L-threonyl-[protein] + ATP = O-phospho-L-threonyl-[protein] + ADP + H(+). Its activity is regulated as follows. Phosphorylated and activated by pdk-1. In terms of biological role, acts downstream of PI3 kinase age-1 and kinase pdk-1 in the daf-2/insulin receptor-like transduction pathway. Phosphorylates Forkhead-related daf-16 and the longevity-promoting skn-1 transcription factors, which inhibits their entry into the nucleus and antagonizes their functions. Plays a role in maintaining the gonadal basement membrane through it's role in inhibiting daf-16 activity. Has an essential role in regulating developmental arrest at the dauer stage. Plays a role in immune function and pathogen resistance. Regulates salt chemotaxis learning. Downstream of age-1 and together with akt-2 and sgk-1, promotes cell survival during embryonic development. The chain is Serine/threonine-protein kinase akt-1 from Caenorhabditis elegans.